Here is a 244-residue protein sequence, read N- to C-terminus: Small ribosomal subunit protein eS4 (244 aa).

Residues 43 to 106 (LPLLLVVRDV…DENYLVLFDE (64 aa)) enclose the S4 RNA-binding domain.

The protein belongs to the eukaryotic ribosomal protein eS4 family.

This chain is Small ribosomal subunit protein eS4, found in Methanococcus maripaludis (strain C5 / ATCC BAA-1333).